The following is a 312-amino-acid chain: Malate dehydrogenase (312 aa).

Residues 7–13 (GAAGGIG) and aspartate 34 each bind NAD(+). Residues arginine 81 and arginine 87 each coordinate substrate. Residues asparagine 94 and 117–119 (ITN) contribute to the NAD(+) site. Residues asparagine 119 and arginine 153 each coordinate substrate. Residue histidine 177 is the Proton acceptor of the active site. Residue methionine 227 coordinates NAD(+).

This sequence belongs to the LDH/MDH superfamily. MDH type 1 family. As to quaternary structure, homodimer.

It catalyses the reaction (S)-malate + NAD(+) = oxaloacetate + NADH + H(+). Catalyzes the reversible oxidation of malate to oxaloacetate. The sequence is that of Malate dehydrogenase from Klebsiella pneumoniae (strain 342).